The following is a 476-amino-acid chain: Trigger factor (476 aa).

The 86-residue stretch at 169-254 (GDKVTLDYVG…VKEVAAAEEL (86 aa)) folds into the PPIase FKBP-type domain. The interval 437–476 (SRDELLAEDEAEGEEKKAAGETKKKAAPKKKAAKKESAAE) is disordered. Basic and acidic residues predominate over residues 450–460 (EEKKAAGETKK).

Belongs to the FKBP-type PPIase family. Tig subfamily.

It localises to the cytoplasm. It carries out the reaction [protein]-peptidylproline (omega=180) = [protein]-peptidylproline (omega=0). Functionally, involved in protein export. Acts as a chaperone by maintaining the newly synthesized protein in an open conformation. Functions as a peptidyl-prolyl cis-trans isomerase. The protein is Trigger factor of Chelativorans sp. (strain BNC1).